The sequence spans 473 residues: Trigger factor (473 aa).

In terms of domain architecture, PPIase FKBP-type spans 171–256 (GDRVTIDFVG…VTKIQAAGEA (86 aa)). Positions 439 to 473 (KEALFADEDGDDTTGGKPADKAEAKDESKTEAKAD) are disordered. The span at 456-473 (PADKAEAKDESKTEAKAD) shows a compositional bias: basic and acidic residues.

This sequence belongs to the FKBP-type PPIase family. Tig subfamily.

Its subcellular location is the cytoplasm. It catalyses the reaction [protein]-peptidylproline (omega=180) = [protein]-peptidylproline (omega=0). Involved in protein export. Acts as a chaperone by maintaining the newly synthesized protein in an open conformation. Functions as a peptidyl-prolyl cis-trans isomerase. The polypeptide is Trigger factor (Methylobacterium radiotolerans (strain ATCC 27329 / DSM 1819 / JCM 2831 / NBRC 15690 / NCIMB 10815 / 0-1)).